Reading from the N-terminus, the 250-residue chain is Anti-Pycsar protein Apyc1 (250 aa).

The segment at 19–220 (YNNNALVKCN…AVQEMIMLMH (202 aa)) is beta-lactamase-like. The Zn(2+) site is built by His61, His63, Asp65, His66, His146, Asp166, and His220.

This sequence belongs to the anti-Pycsar protein Apyc1 family. Homodimer. Zn(2+) is required as a cofactor.

The catalysed reaction is 3',5'-cyclic CMP + H2O = CMP + H(+). The enzyme catalyses 3',5'-cyclic UMP + H2O = UMP + H(+). In terms of biological role, counteracts the endogenous Pycsar antiviral defense system. Phosphodiesterase that enables metal-dependent hydrolysis of host cyclic nucleotide Pycsar defense signals such as cCMP and cUMP. The polypeptide is Anti-Pycsar protein Apyc1 (Paenibacillus xerothermodurans).